A 564-amino-acid chain; its full sequence is Ovochymase-2 (564 aa).

The N-terminal stretch at 1–22 (MLISRNKLILLLGIVFFERGKS) is a signal peptide. Positions 23-51 (ATLSLPKAPSCGQSLVKVQPWNYFNIFSR) are cleaved as a propeptide — activation peptide. Positions 52 to 299 (ILGGSQVEKG…VLPWIHEHIQ (248 aa)) constitute a Peptidase S1 domain. C77 and C93 form a disulfide bridge. The active-site Charge relay system is the H92. Residue N104 is glycosylated (N-linked (GlcNAc...) asparagine). E119 is a Ca(2+) binding site. D142 (charge relay system) is an active-site residue. 5 cysteine pairs are disulfide-bonded: C176–C246, C207–C225, C236–C265, C311–C341, and C365–C384. Residue S240 is the Charge relay system of the active site. CUB domains follow at residues 311–421 (CSEQ…YKAL) and 431–543 (CSYL…VSFI). Residues N415 and N451 are each glycosylated (N-linked (GlcNAc...) asparagine). Cystine bridges form between C431/C458 and C485/C506. Residue N530 is glycosylated (N-linked (GlcNAc...) asparagine).

This sequence belongs to the peptidase S1 family.

It is found in the secreted. Its function is as follows. May be required for sperm ADAM3 processing and consequential sperm fertilizing ability. In vitro, has an endopeptidase activity. This chain is Ovochymase-2, found in Homo sapiens (Human).